Here is a 468-residue protein sequence, read N- to C-terminus: 6-phospho-beta-galactosidase (468 aa).

Gln-19, His-116, Asn-159, Glu-160, and Asn-297 together coordinate D-galactose 6-phosphate. Catalysis depends on Glu-160, which acts as the Proton donor. Catalysis depends on Glu-375, which acts as the Nucleophile. Residues Ser-428, Trp-429, Lys-435, and Tyr-437 each coordinate D-galactose 6-phosphate.

This sequence belongs to the glycosyl hydrolase 1 family.

It catalyses the reaction a 6-phospho-beta-D-galactoside + H2O = D-galactose 6-phosphate + an alcohol. The protein operates within carbohydrate metabolism; lactose degradation; D-galactose 6-phosphate and beta-D-glucose from lactose 6-phosphate: step 1/1. This is 6-phospho-beta-galactosidase from Streptococcus pyogenes serotype M28 (strain MGAS6180).